We begin with the raw amino-acid sequence, 628 residues long: EIN3-binding F-box protein 1 (628 aa).

An F-box domain is found at 61-109; it reads PVSIDVLPDECLFEIFRRLSGPQERSACAFVSKQWLTLVSSIRQKEIDV.

As to quaternary structure, part of a SCF (SKP1-cullin-F-box) protein ligase complex. Interacts with CUL1, SKP1A/ASK1, SKP1B/ASK2, ASK11, ASK12, ASK13, ASK18, EIN3, and EIL1. As to expression, ubiquitous.

It is found in the nucleus. The protein operates within protein modification; protein ubiquitination. In terms of biological role, component of SCF(EBF1) E3 ubiquitin ligase complexes, which may mediate the ubiquitination and subsequent proteasomal degradation of target proteins (probably including EIN3 and EIL1). Regulator of the ethylene signaling cascade by modulating the stability of EIN3 and EIL1 proteins. Confers insensitivity to ethylene. In Arabidopsis thaliana (Mouse-ear cress), this protein is EIN3-binding F-box protein 1 (EBF1).